The primary structure comprises 1563 residues: Rab-3-interacting molecule unc-10 (1563 aa).

Positions 7–133 (MPDLSHLSAE…AKTGKWFQPE (127 aa)) constitute a RabBD domain. Basic and acidic residues predominate over residues 25-35 (FKRQKDEEAKE). The disordered stretch occupies residues 25–50 (FKRQKDEEAKETQISQKASEELSELD). Residues 66-121 (TQDDAICQICQKTKFADGIGHKCFYCQLRSCARCGGRAQSKNKAIWACSLCQKRQQ) form an FYVE-type zinc finger. 8 residues coordinate Zn(2+): Cys72, Cys75, Cys88, Cys91, Cys96, Cys99, Cys113, and Cys116. Disordered stretches follow at residues 128-466 (KWFQ…DHLN) and 582-605 (GGLDMQANRRRDKSLSLSPSRNDH). Over residues 172–182 (NTPNYQNNQQP) the composition is skewed to polar residues. Low complexity-rich tracts occupy residues 190–284 (NHNQ…RNQT) and 300–316 (QTPQQQPSQYQNNVGAA). The segment covering 326-345 (QEQHHQQMNEQRTDNNRMRE) has biased composition (basic and acidic residues). 2 stretches are compositionally biased toward polar residues: residues 356–367 (RQPSLEQTTPMN) and 379–389 (QRPTFYTGNSE). The segment covering 395-415 (FDGQMQQGSQQNNQNQNQNNR) has biased composition (low complexity). The region spanning 643–733 (HMILHRTENS…DTSVELIVSR (91 aa)) is the PDZ domain. The C2 1 domain occupies 840–962 (IFGRIEVSFV…PLDGEHSLMC (123 aa)). Disordered regions lie at residues 1054–1163 (ENDI…YLGD), 1177–1311 (GQMT…GGSA), and 1346–1373 (VGIPGNLSSDRLTEPTPPFLKQASKEST). Residues 1086–1097 (WTQNHQRQSGYT) are compositionally biased toward polar residues. The segment covering 1112–1121 (YNRRQQRRPR) has biased composition (basic residues). Residues 1129–1154 (MEREDMYDPTRKHRDDNEYSMRESVR) are compositionally biased toward basic and acidic residues. Over residues 1181 to 1230 (PKQHNQQHQPHPLSQAHQQQQTAGVQPQHHQGFQQQQHPQQPNQQMQQMQ) the composition is skewed to low complexity. Polar residues predominate over residues 1242–1255 (GSETLSVHSTNSMP). Over residues 1256 to 1277 (TTMTTVNRRNMNANNTSNDNTS) the composition is skewed to low complexity. Residues 1278–1288 (FAETPTANTNR) show a composition bias toward polar residues. The span at 1297–1311 (NSLASSSSVAGGGSA) shows a compositional bias: low complexity. Residues 1417–1536 (VLGEIQIALM…LGSQPLIGWY (120 aa)) enclose the C2 2 domain.

Restricted to discrete puncta in synapse-rich regions of the nervous system including the nerve ring, the ventral nerve cord and the dorsal nerve cord. Localized expression was found in the head.

It localises to the synapse. Functionally, regulates the efficiency of a post-docking step of the release pathway. Acts after vesicle docking likely via regulating priming. May regulate the conformational changes in syntaxin. Binding of vesicles via rab-3[GTP] to Rim may signal the presence of a docked synaptic vesicle. Rim may then signal to unc-13 to change the conformation of syntaxin from the closed to the open state. Syntaxin could then engage synaptobrevin on the docked vesicle to form SNARE complexes and to prime the vesicle for release. Not required for the development or the structural organization of synapses. May play a role in regulating entry into the dauer state. This is Rab-3-interacting molecule unc-10 from Caenorhabditis elegans.